The following is a 271-amino-acid chain: Formamidopyrimidine-DNA glycosylase (271 aa).

The Schiff-base intermediate with DNA role is filled by Pro2. Glu3 acts as the Proton donor in catalysis. Lys58 serves as the catalytic Proton donor; for beta-elimination activity. The DNA site is built by His91, Arg110, and Arg152. The FPG-type zinc finger occupies 237 to 271 (WVYGRTGQPCRKCGALVSKTRQGQRSSFFCAQCQK). Arg261 acts as the Proton donor; for delta-elimination activity in catalysis.

The protein belongs to the FPG family. Monomer. The cofactor is Zn(2+).

It carries out the reaction Hydrolysis of DNA containing ring-opened 7-methylguanine residues, releasing 2,6-diamino-4-hydroxy-5-(N-methyl)formamidopyrimidine.. The catalysed reaction is 2'-deoxyribonucleotide-(2'-deoxyribose 5'-phosphate)-2'-deoxyribonucleotide-DNA = a 3'-end 2'-deoxyribonucleotide-(2,3-dehydro-2,3-deoxyribose 5'-phosphate)-DNA + a 5'-end 5'-phospho-2'-deoxyribonucleoside-DNA + H(+). Its function is as follows. Involved in base excision repair of DNA damaged by oxidation or by mutagenic agents. Acts as a DNA glycosylase that recognizes and removes damaged bases. Has a preference for oxidized purines, such as 7,8-dihydro-8-oxoguanine (8-oxoG). Has AP (apurinic/apyrimidinic) lyase activity and introduces nicks in the DNA strand. Cleaves the DNA backbone by beta-delta elimination to generate a single-strand break at the site of the removed base with both 3'- and 5'-phosphates. The chain is Formamidopyrimidine-DNA glycosylase from Nitrosomonas eutropha (strain DSM 101675 / C91 / Nm57).